We begin with the raw amino-acid sequence, 268 residues long: Expansin-B3 (268 aa).

The first 25 residues, 1 to 25, serve as a signal peptide directing secretion; it reads MAFSISKKAAVAALFSFLVVTCVAG. N-linked (GlcNAc...) asparagine glycosylation occurs at N30. One can recognise an Expansin-like EG45 domain in the interval 62–168; the sequence is GGACGFKNTN…KRVPCNFPGL (107 aa). 3 cysteine pairs are disulfide-bonded: C65–C93, C96–C163, and C101–C107. The region spanning 181–262 is the Expansin-like CBD domain; it reads VYFAVLVEYE…NWAPMAVYRS (82 aa). The N-linked (GlcNAc...) asparagine glycan is linked to N238.

This sequence belongs to the expansin family. Expansin B subfamily. Expressed in roots, coleoptiles and internodes.

The protein resides in the secreted. Its subcellular location is the cell wall. It is found in the membrane. In terms of biological role, may cause loosening and extension of plant cell walls by disrupting non-covalent bonding between cellulose microfibrils and matrix glucans. No enzymatic activity has been found. May be required for rapid internodal elongation in deepwater rice during submergence. This Oryza sativa subsp. japonica (Rice) protein is Expansin-B3 (EXPB3).